A 471-amino-acid polypeptide reads, in one-letter code: Iroquois-class homeodomain protein IRX-2 (471 aa).

The homeobox; TALE-type DNA-binding region spans L112 to E175. Disordered regions lie at residues N176–P373 and A424–L471. S186 bears the Phosphoserine mark. Residues D195–E209 are compositionally biased toward basic and acidic residues. A compositionally biased stretch (acidic residues) spans D261–G273. Positions P355 to P367 are enriched in low complexity. Positions V462–L471 are enriched in gly residues.

It belongs to the TALE/IRO homeobox family.

Its subcellular location is the nucleus. The chain is Iroquois-class homeodomain protein IRX-2 (IRX2) from Homo sapiens (Human).